We begin with the raw amino-acid sequence, 98 residues long: MTMVYANIFLAFITSLMGLLMYRSHLMSSLLCLEGMMLSLFVMMTVTILNNHFTLASMTPIILLVFAACEAALGLSLLVMVSNTYGTDYVQNLNLLQC.

3 helical membrane-spanning segments follow: residues 1-21 (MTMV…GLLM), 29-49 (SLLC…VTIL), and 61-81 (IILL…LVMV).

Belongs to the complex I subunit 4L family. Core subunit of respiratory chain NADH dehydrogenase (Complex I) which is composed of 45 different subunits.

The protein resides in the mitochondrion inner membrane. It catalyses the reaction a ubiquinone + NADH + 5 H(+)(in) = a ubiquinol + NAD(+) + 4 H(+)(out). Core subunit of the mitochondrial membrane respiratory chain NADH dehydrogenase (Complex I) which catalyzes electron transfer from NADH through the respiratory chain, using ubiquinone as an electron acceptor. Part of the enzyme membrane arm which is embedded in the lipid bilayer and involved in proton translocation. The sequence is that of NADH-ubiquinone oxidoreductase chain 4L (MT-ND4L) from Leptonychotes weddellii (Weddell seal).